Consider the following 85-residue polypeptide: Small ribosomal subunit protein uS17 (85 aa).

It belongs to the universal ribosomal protein uS17 family. In terms of assembly, part of the 30S ribosomal subunit.

One of the primary rRNA binding proteins, it binds specifically to the 5'-end of 16S ribosomal RNA. The polypeptide is Small ribosomal subunit protein uS17 (Anaeromyxobacter sp. (strain Fw109-5)).